Here is a 108-residue protein sequence, read N- to C-terminus: ATP-dependent Clp protease adapter protein ClpS (108 aa).

The span at 1-10 (MADSDKHGDE) shows a compositional bias: basic and acidic residues. The tract at residues 1–21 (MADSDKHGDEGPSTGVVVKAK) is disordered.

The protein belongs to the ClpS family. In terms of assembly, binds to the N-terminal domain of the chaperone ClpA.

Involved in the modulation of the specificity of the ClpAP-mediated ATP-dependent protein degradation. This chain is ATP-dependent Clp protease adapter protein ClpS, found in Rhodospirillum centenum (strain ATCC 51521 / SW).